The following is a 964-amino-acid chain: Translation initiation factor IF-2 (964 aa).

The disordered stretch occupies residues 35–353; the sequence is ASSTIEPPVV…RQKRNEYESM (319 aa). A compositionally biased stretch (low complexity) spans 64-108; the sequence is KPTPAKPAAKPGAPAPKPGTAQKPTAPTPGAVAAPKPGTAAAKPT. Pro residues predominate over residues 124–133; sequence PAKPTAPKPA. Over residues 145 to 155 the composition is skewed to basic and acidic residues; it reads AAKKAAEDKAT. Positions 166–178 are enriched in pro residues; sequence NAMPRPMAKPGPK. A compositionally biased stretch (low complexity) spans 220 to 233; it reads PRPQGGQRSGAPRD. Gly residues-rich tracts occupy residues 234 to 252 and 290 to 333; these read GQGG…GPRP and GKGG…GRPG. Positions 337–346 are enriched in basic residues; sequence RRGRKSKRQK. One can recognise a tr-type G domain in the interval 459 to 631; that stretch reads KRPPVVTVMG…VCLTADAELD (173 aa). The G1 stretch occupies residues 468-475; the sequence is GHVDHGKT. 468 to 475 contributes to the GTP binding site; sequence GHVDHGKT. Residues 493 to 497 form a G2 region; it reads GITQG. Positions 518–521 are G3; it reads DTPG. GTP is bound by residues 518–522 and 572–575; these read DTPGH and NKID. Residues 572–575 form a G4 region; the sequence is NKID. The interval 608–610 is G5; sequence SAK.

It belongs to the TRAFAC class translation factor GTPase superfamily. Classic translation factor GTPase family. IF-2 subfamily.

The protein localises to the cytoplasm. Functionally, one of the essential components for the initiation of protein synthesis. Protects formylmethionyl-tRNA from spontaneous hydrolysis and promotes its binding to the 30S ribosomal subunits. Also involved in the hydrolysis of GTP during the formation of the 70S ribosomal complex. This Corynebacterium efficiens (strain DSM 44549 / YS-314 / AJ 12310 / JCM 11189 / NBRC 100395) protein is Translation initiation factor IF-2.